Here is a 188-residue protein sequence, read N- to C-terminus: Elongation factor P (188 aa).

It belongs to the elongation factor P family.

It localises to the cytoplasm. The protein operates within protein biosynthesis; polypeptide chain elongation. Involved in peptide bond synthesis. Stimulates efficient translation and peptide-bond synthesis on native or reconstituted 70S ribosomes in vitro. Probably functions indirectly by altering the affinity of the ribosome for aminoacyl-tRNA, thus increasing their reactivity as acceptors for peptidyl transferase. The polypeptide is Elongation factor P (Rickettsia bellii (strain OSU 85-389)).